The sequence spans 205 residues: Thiamine-phosphate synthase (205 aa).

Residues 36–40 (QYRRK) and aspartate 68 each bind 4-amino-2-methyl-5-(diphosphooxymethyl)pyrimidine. Aspartate 69 and aspartate 88 together coordinate Mg(2+). Position 106 (serine 106) interacts with 4-amino-2-methyl-5-(diphosphooxymethyl)pyrimidine. 132–134 (SPT) contributes to the 2-[(2R,5Z)-2-carboxy-4-methylthiazol-5(2H)-ylidene]ethyl phosphate binding site. A 4-amino-2-methyl-5-(diphosphooxymethyl)pyrimidine-binding site is contributed by lysine 135. Residues glycine 162 and 182 to 183 (IS) each bind 2-[(2R,5Z)-2-carboxy-4-methylthiazol-5(2H)-ylidene]ethyl phosphate.

This sequence belongs to the thiamine-phosphate synthase family. It depends on Mg(2+) as a cofactor.

The catalysed reaction is 2-[(2R,5Z)-2-carboxy-4-methylthiazol-5(2H)-ylidene]ethyl phosphate + 4-amino-2-methyl-5-(diphosphooxymethyl)pyrimidine + 2 H(+) = thiamine phosphate + CO2 + diphosphate. It catalyses the reaction 2-(2-carboxy-4-methylthiazol-5-yl)ethyl phosphate + 4-amino-2-methyl-5-(diphosphooxymethyl)pyrimidine + 2 H(+) = thiamine phosphate + CO2 + diphosphate. The enzyme catalyses 4-methyl-5-(2-phosphooxyethyl)-thiazole + 4-amino-2-methyl-5-(diphosphooxymethyl)pyrimidine + H(+) = thiamine phosphate + diphosphate. It participates in cofactor biosynthesis; thiamine diphosphate biosynthesis; thiamine phosphate from 4-amino-2-methyl-5-diphosphomethylpyrimidine and 4-methyl-5-(2-phosphoethyl)-thiazole: step 1/1. Condenses 4-methyl-5-(beta-hydroxyethyl)thiazole monophosphate (THZ-P) and 2-methyl-4-amino-5-hydroxymethyl pyrimidine pyrophosphate (HMP-PP) to form thiamine monophosphate (TMP). The protein is Thiamine-phosphate synthase of Caldivirga maquilingensis (strain ATCC 700844 / DSM 13496 / JCM 10307 / IC-167).